Consider the following 150-residue polypeptide: SsrA-binding protein (150 aa).

A disordered region spans residues 127–150 (KRETEKQRDWQREKARIMKGDAKD).

It belongs to the SmpB family.

The protein resides in the cytoplasm. Its function is as follows. Required for rescue of stalled ribosomes mediated by trans-translation. Binds to transfer-messenger RNA (tmRNA), required for stable association of tmRNA with ribosomes. tmRNA and SmpB together mimic tRNA shape, replacing the anticodon stem-loop with SmpB. tmRNA is encoded by the ssrA gene; the 2 termini fold to resemble tRNA(Ala) and it encodes a 'tag peptide', a short internal open reading frame. During trans-translation Ala-aminoacylated tmRNA acts like a tRNA, entering the A-site of stalled ribosomes, displacing the stalled mRNA. The ribosome then switches to translate the ORF on the tmRNA; the nascent peptide is terminated with the 'tag peptide' encoded by the tmRNA and targeted for degradation. The ribosome is freed to recommence translation, which seems to be the essential function of trans-translation. This Cupriavidus necator (strain ATCC 17699 / DSM 428 / KCTC 22496 / NCIMB 10442 / H16 / Stanier 337) (Ralstonia eutropha) protein is SsrA-binding protein.